The following is a 350-amino-acid chain: MFS transporter OpS2 (350 aa).

The next 8 helical transmembrane spans lie at 3–23 (FLAGGASASVAAVGAGTVADL), 34–54 (GYFFLGPMLGPLVSPIIGGIL), 65–85 (WGAVVYGGLVWLSMIFLLPET), 141–161 (FMTCYYASISFACYYILNLAI), 174–194 (AIILGLLYIPSALGSIVASVV), 227–247 (MCENAWIPAFVFPAALLVFGW), 253–273 (IFWFAPIVVTFFFGLGNSLIF), and 312–332 (PLLGAIGTQWLFTGLAVICWA).

This sequence belongs to the major facilitator superfamily.

The protein resides in the cell membrane. Its function is as follows. MFS transporter; part of the gene cluster that mediates the biosynthesis of the bibenzoquinone oosporein, a metabolite required for fungal virulence that acts by evading host immunity to facilitate fungal multiplication in insects. The function of this putative MFS transporter remains unclear since its deletion leads to increased oosporein production. In Beauveria bassiana (strain ARSEF 2860) (White muscardine disease fungus), this protein is MFS transporter OpS2.